Consider the following 405-residue polypeptide: Imidazolonepropionase (405 aa).

Fe(3+) contacts are provided by His-72 and His-74. Residues His-72 and His-74 each contribute to the Zn(2+) site. 3 residues coordinate 4-imidazolone-5-propanoate: Arg-81, Tyr-144, and His-177. Position 144 (Tyr-144) interacts with N-formimidoyl-L-glutamate. Residue His-242 coordinates Fe(3+). His-242 is a binding site for Zn(2+). Residue Gln-245 participates in 4-imidazolone-5-propanoate binding. Asp-317 lines the Fe(3+) pocket. A Zn(2+)-binding site is contributed by Asp-317. Asn-319 and Gly-321 together coordinate N-formimidoyl-L-glutamate. Thr-322 serves as a coordination point for 4-imidazolone-5-propanoate.

Belongs to the metallo-dependent hydrolases superfamily. HutI family. The cofactor is Zn(2+). It depends on Fe(3+) as a cofactor.

It is found in the cytoplasm. It catalyses the reaction 4-imidazolone-5-propanoate + H2O = N-formimidoyl-L-glutamate. It participates in amino-acid degradation; L-histidine degradation into L-glutamate; N-formimidoyl-L-glutamate from L-histidine: step 3/3. In terms of biological role, catalyzes the hydrolytic cleavage of the carbon-nitrogen bond in imidazolone-5-propanoate to yield N-formimidoyl-L-glutamate. It is the third step in the universal histidine degradation pathway. The protein is Imidazolonepropionase of Klebsiella pneumoniae subsp. pneumoniae (strain ATCC 700721 / MGH 78578).